The following is a 330-amino-acid chain: Aspartate--ammonia ligase (330 aa).

It belongs to the class-II aminoacyl-tRNA synthetase family. AsnA subfamily.

Its subcellular location is the cytoplasm. The enzyme catalyses L-aspartate + NH4(+) + ATP = L-asparagine + AMP + diphosphate + H(+). It functions in the pathway amino-acid biosynthesis; L-asparagine biosynthesis; L-asparagine from L-aspartate (ammonia route): step 1/1. The polypeptide is Aspartate--ammonia ligase (Haemophilus influenzae (strain PittEE)).